The sequence spans 1394 residues: MVFGELMSSAGDSGPGYVLNDFDAVPRLSYARSIDIRDSLSDLIRIQRDSYDAFIGIDEGSSGGIQSIFQSMFPIRDPLGRAVLEFVSCNIGEPQYDEYECIKRGITFSVPMRITLRFVVWKVQEVSFKEVKYVVDEGTLERSVKYMKEQEVSIGDLPMMTSYGTFIINGIERVIVSQMHRSPGVFFDSDKGKTYSSGKLIYSARIIPYRGSWLDFEFDIKDIIYFRIDKKRKLPVTYLLKALGMSNNDILDTFYDKVLYVRSDKGWKVPFVVDRFKGVRLSYDLMDVDGNVLIKANTRITLRIAKKLYADGLREYLVPFAGISGLFVATDLVDPASGAVIVSAGEAIAAEHIVKLELFDISEIAFLNIDFLTVGPYVLNTLFLDRHITQEDALFEIYRVLRSGESPNLEAVKSFFKGLFFEPDRYDLSVVGRIKLNSHLRLDIDENLTVLTKDDIVHVIKKLVLLRDGEGVVDDIDHLGNRRVRSVGEFIENQFRVGILRLERMIMDYMSSVNFDNAVPCDFVNPKILATVLKDFFSSSQLSQFMDQTNPLSEVTHKRRLSALGPGGLTRERAGFEVRDVHPTHYGRICPIETPEGQNIGLISSLAIYAKINKYGFIESPYRKVIDGVVTDSVEYLLATQESDYYIADAGAALDENNRFVDDMLYCRHGGNFVMVKREDVNYIDVSPKQIVSVAASLIPFLENNDANRALMGSNMQRQAVPLLKAEAPLVGTGMESVVAAGSGAVVLAKRDGVLHRVDRVLYPVIRAFDKNKDSILVLIYTTEKVQRSNHNTCINQRPIVKIGDYVRTNDVIADGAAIDRGELALGKNVLVAFMSWQGCNFEDSIVISSDVVKRDVFTSIHIEEFECVVRDTPLGPEKIMRSVPDVNEESLSHLDDVGIVNIGAEVSAGSVLVGKVTPRPPVSLPPETKLLVTIFGEKVFDCVDSSLYLPPDVEGTVIDVHVFVRRGVEENDRSLLIKQSEVNSFRKERDYEIDVVSEYFYDELKKLLCSADLPLNGHADVESLLAAKSLEALWEIGLSNPKISAKVADMKGKFDELITEAHSKFDQKIDKLNYGYDLPQGVLTIVKVFVAVKHNLQPGDKMAGRHGNKGVISRIVPVEDMPHLEDGTPVDIILNSLGVPSRMNIGQILETHLGWAAVNLGHRVGRMLDSGEEEGPVVERIRSFLSEVYEGQKLKEDVASMSDEALLKFANRLRRGVPMAAPVFEGPKDAQISRLLELADVDPSGQVDLYDGRSGQKFDRKVTVGYIYMLKLHHLVDDKIHARSVGPYGLVTQQPLGGKSHFGGQRFGEMECWALQAYGAAYTLQEMLTVKSDDTSPGRRPRVPYSESYYIKGDSNFECGIPESFNVMVKELRSLCLDVVLKHDKEFTSSNVE.

The protein belongs to the RNA polymerase beta chain family. In terms of assembly, the RNAP catalytic core consists of 2 alpha, 1 beta, 1 beta' and 1 omega subunit. When a sigma factor is associated with the core the holoenzyme is formed, which can initiate transcription.

The catalysed reaction is RNA(n) + a ribonucleoside 5'-triphosphate = RNA(n+1) + diphosphate. Functionally, DNA-dependent RNA polymerase catalyzes the transcription of DNA into RNA using the four ribonucleoside triphosphates as substrates. In Anaplasma phagocytophilum (Ehrlichia phagocytophila), this protein is DNA-directed RNA polymerase subunit beta.